Consider the following 515-residue polypeptide: MAEQVALSRTQVCGILREELYQGDAFHQADTHIFIIMGASGDLAKKKIYPTIWWLFRDGLLPEDTFIVGYARSRLTVDDIRKQSEPFFKATPEERPKLEEFFARNSYVAGQYDDAASYKHLNSHMNALHQGMQANRLFYLALPPTVYEAVTKNIQETCMSQTGWNRIIVEKPFGRDLQSSNQLSNHISSLFREDQIYRIDHYLGKEMVQNLMVLRFANRIFGPIWNRDNIACVILTFKEPFGTEGRGGYFDEFGIIRDVMQNHLLQMLCLVAMEKPATTGSDDVRDEKVKVLKCISEVETDNVVLGQYVGNPNGEGEAANGYLDDPTVPHGSTTATFAAAVLYVENERWDGVPFILRCGKALNERKAEVRLQFRDVAGDIFHQQCKRNELVIRVQPNEAVYTKMMTKKPGMFFNPEESELDLTYGNRYKNVKLPDAYERLILDVFCGSQMHFVRSDELREAWRIFTPLLHKIDREKPQPIPYVYGSRGPTEADELMKRVGFQYEGTYKWVNPHKL.

Ala2 is subject to N-acetylalanine. Residues 38-45 (GASGDLAK), Arg72, Tyr147, and Lys171 each bind NADP(+). Residues Lys171, 201-205 (HYLGK), Glu239, and Asp258 contribute to the D-glucose 6-phosphate site. The active-site Proton acceptor is His263. Arg357 is an NADP(+) binding site. The D-glucose 6-phosphate site is built by Lys360 and Arg365. The NADP(+) site is built by Lys366, Arg370, and Arg393. Gln395 provides a ligand contact to D-glucose 6-phosphate. NADP(+)-binding positions include 401 to 403 (YTK), 421 to 423 (DLT), Arg487, and Tyr503. The residue at position 507 (Tyr507) is a Phosphotyrosine. Trp509 lines the NADP(+) pocket.

It belongs to the glucose-6-phosphate dehydrogenase family. As to quaternary structure, homotetramer; dimer of dimers. Interacts with SIRT2; the interaction is enhanced by H(2)O(2) treatment. Forms a ternary complex with ALDOB and TP53; this interaction is direct. ALDOB stabilizes the complex inhibiting G6PD activity and keeping oxidative pentose phosphate metabolism in check. Post-translationally, acetylated by ELP3 at Lys-403; acetylation inhibits its homodimerization and enzyme activity. Deacetylated by SIRT2 at Lys-403; deacetylation stimulates its enzyme activity.

It is found in the cytoplasm. The protein localises to the cytosol. The protein resides in the membrane. It carries out the reaction D-glucose 6-phosphate + NADP(+) = 6-phospho-D-glucono-1,5-lactone + NADPH + H(+). It functions in the pathway carbohydrate degradation; pentose phosphate pathway; D-ribulose 5-phosphate from D-glucose 6-phosphate (oxidative stage): step 1/3. Functionally, catalyzes the rate-limiting step of the oxidative pentose-phosphate pathway, which represents a route for the dissimilation of carbohydrates besides glycolysis. The main function of this enzyme is to provide reducing power (NADPH) and pentose phosphates for fatty acid and nucleic acid synthesis. The sequence is that of Glucose-6-phosphate 1-dehydrogenase X (G6pdx) from Mus musculus (Mouse).